We begin with the raw amino-acid sequence, 158 residues long: Succinate dehydrogenase assembly factor 2, mitochondrial (158 aa).

The N-terminal 23 residues, 1-23, are a transit peptide targeting the mitochondrion; it reads MLRQLLATARRLLLPLATPKRCL.

It belongs to the SDHAF2 family. As to quaternary structure, interacts with the flavoprotein subunit within the SDH catalytic dimer.

The protein resides in the mitochondrion matrix. Functionally, plays an essential role in the assembly of succinate dehydrogenase (SDH), an enzyme complex (also referred to as respiratory complex II) that is a component of both the tricarboxylic acid (TCA) cycle and the mitochondrial electron transport chain, and which couples the oxidation of succinate to fumarate with the reduction of ubiquinone (coenzyme Q) to ubiquinol. Required for flavinylation (covalent attachment of FAD) of the flavoprotein subunit of the SDH catalytic dimer. In Drosophila virilis (Fruit fly), this protein is Succinate dehydrogenase assembly factor 2, mitochondrial.